The primary structure comprises 171 residues: 3-hydroxydecanoyl-[acyl-carrier-protein] dehydratase (171 aa).

Histidine 70 is an active-site residue.

This sequence belongs to the thioester dehydratase family. FabA subfamily. As to quaternary structure, homodimer.

Its subcellular location is the cytoplasm. The enzyme catalyses a (3R)-hydroxyacyl-[ACP] = a (2E)-enoyl-[ACP] + H2O. It catalyses the reaction (3R)-hydroxydecanoyl-[ACP] = (2E)-decenoyl-[ACP] + H2O. It carries out the reaction (2E)-decenoyl-[ACP] = (3Z)-decenoyl-[ACP]. It participates in lipid metabolism; fatty acid biosynthesis. Its function is as follows. Necessary for the introduction of cis unsaturation into fatty acids. Catalyzes the dehydration of (3R)-3-hydroxydecanoyl-ACP to E-(2)-decenoyl-ACP and then its isomerization to Z-(3)-decenoyl-ACP. Can catalyze the dehydratase reaction for beta-hydroxyacyl-ACPs with saturated chain lengths up to 16:0, being most active on intermediate chain length. In Vibrio campbellii (strain ATCC BAA-1116), this protein is 3-hydroxydecanoyl-[acyl-carrier-protein] dehydratase.